Here is a 313-residue protein sequence, read N- to C-terminus: Methionyl-tRNA formyltransferase (313 aa).

Position 112–115 (112–115 (SLLP)) interacts with (6S)-5,6,7,8-tetrahydrofolate.

Belongs to the Fmt family.

The catalysed reaction is L-methionyl-tRNA(fMet) + (6R)-10-formyltetrahydrofolate = N-formyl-L-methionyl-tRNA(fMet) + (6S)-5,6,7,8-tetrahydrofolate + H(+). Functionally, attaches a formyl group to the free amino group of methionyl-tRNA(fMet). The formyl group appears to play a dual role in the initiator identity of N-formylmethionyl-tRNA by promoting its recognition by IF2 and preventing the misappropriation of this tRNA by the elongation apparatus. This chain is Methionyl-tRNA formyltransferase, found in Geotalea uraniireducens (strain Rf4) (Geobacter uraniireducens).